Here is a 161-residue protein sequence, read N- to C-terminus: Interleukin-17F (161 aa).

The N-terminal stretch at 1 to 28 (MKCTRETAMVKSLLLLMLGLAILREVAA) is a signal peptide. The N-linked (GlcNAc...) asparagine glycan is linked to asparagine 83. 2 disulfide bridges follow: cysteine 100–cysteine 150 and cysteine 105–cysteine 152.

The protein belongs to the IL-17 family. In terms of assembly, homodimer; disulfide-linked. Heterodimer with IL17A (IL17A-IL17F). Forms complexes with IL17RA and IL17RC receptors with 2:1 binding stoichiometry: two receptor chains for one interleukin molecule. IL17F homodimer forms predominantly complexes with IL17RC homodimer, whereas IL17A-IL17F favors complexes with IL17RA-IL17RC. IL17RA and IL17RC chains cannot distinguish between IL17A and IL17F molecules, potentially enabling the formation of topologically distinct complexes. Expressed by T-helper 17 cells (Th17) (at protein level). The expression pattern reflects the differentiation state. In fully differentiated Th17 cells, IL17A-IL17F heterodimers are produced at higher levels than IL17A-IL17A and IL17F-IL17F dimers. Dominantly secreted in intestine. Expressed by resident cells of the lamina propria, both epithelial cells and immune cell subsets including natural killer cells, dendritic cells, macrophages and various T and B cell subsets. Expressed by epithelial cells and innate immune cells in the colon. Expressed in group 3 innate lymphoid cells.

The protein resides in the secreted. Its function is as follows. Effector cytokine of innate and adaptive immune system involved in antimicrobial host defense and maintenance of tissue integrity. IL17A-IL17F signals via IL17RA-IL17RC heterodimeric receptor complex, triggering homotypic interaction of IL17RA and IL17RC chains with TRAF3IP2 adapter through SEFIR domains. This leads to downstream TRAF6-mediated activation of NF-kappa-B and MAPkinase pathways ultimately resulting in transcriptional activation of cytokines, chemokines, antimicrobial peptides and matrix metalloproteinases, with potential strong immune inflammation. IL17A-IL17F is primarily involved in host defense against extracellular bacteria and fungi by inducing neutrophilic inflammation. As signature effector cytokine of T-helper 17 cells (Th17), primarily induces neutrophil activation and recruitment at infection and inflammatory sites. Stimulates the production of antimicrobial beta-defensins DEFB1, DEFB103A, and DEFB104A by mucosal epithelial cells, limiting the entry of microbes through the epithelial barriers. IL17F homodimer can signal via IL17RC homodimeric receptor complex, triggering downstream activation of TRAF6 and NF-kappa-B signaling pathway. Via IL17RC induces transcriptional activation of IL33, a potent cytokine that stimulates group 2 innate lymphoid cells and adaptive T-helper 2 cells involved in pulmonary allergic response to fungi. Likely via IL17RC, promotes sympathetic innervation of peripheral organs by coordinating the communication between gamma-delta T cells and parenchymal cells. Stimulates sympathetic innervation of thermogenic adipose tissue by driving TGFB1 expression. Regulates the composition of intestinal microbiota and immune tolerance by inducing antimicrobial proteins that specifically control the growth of commensal Firmicutes and Bacteroidetes. This chain is Interleukin-17F (Il17f), found in Mus musculus (Mouse).